Here is a 509-residue protein sequence, read N- to C-terminus: MDLEAKLHEIRKPIMVLGTSSGAGKSLTVTAICRILKNLGEEPIPFKGQNMSNNAWIDWEGGEMAYSQALQAFACGINPSAEMNPILLKPQGNSTSEVIHLGKSIGTTTAQNYYKDWFIPGWEVIKKSLKSIYELNPNCRLIIEGAGSPVEMNLIHRDLTNLRVAKYLNANCLLVTDIERGGVFAQIIGTLELMKPEERKLIKGIIINRFRGDLSLFEDGKKWIENKTQIPVIGIIPWLNDSFPPEDSLDLIEKKSLSKNHEIKVGIIKLPSISNFSDFDPLENEETILIEWIRKSKNLSTYDFIILPGSKQTIKDQKFLENSGLSQDIRDYSNNEGNIIGICGGLQMLGTTLEDPYFKEGAKNYSEQKINGIGLLPLKTTFFKKKLTRQINTKSIWPCQSQINGFEIHNGQTILDDSQSSLKINPIFEDLDLGWFKENNKGGTIAGTYIHGIFENDSWREQYINLIRKSKNLPILNKKSISYKKKRESIIDNLANEFHKHLNLTSFLS.

In terms of domain architecture, GATase cobBQ-type spans 262–459 (EIKVGIIKLP…IHGIFENDSW (198 aa)). Cys343 (nucleophile) is an active-site residue. The active site involves His451.

The protein belongs to the CobB/CobQ family. CobQ subfamily.

It participates in cofactor biosynthesis; adenosylcobalamin biosynthesis. In terms of biological role, catalyzes amidations at positions B, D, E, and G on adenosylcobyrinic A,C-diamide. NH(2) groups are provided by glutamine, and one molecule of ATP is hydrogenolyzed for each amidation. The polypeptide is Cobyric acid synthase (Prochlorococcus marinus (strain MIT 9215)).